We begin with the raw amino-acid sequence, 652 residues long: RNA-binding E3 ubiquitin-protein ligase MEX3C (652 aa).

Disordered regions lie at residues 15–39 (AAPAPLPQPPPLPPPPPAGGPELEG) and 80–136 (QARR…EDRP). Pro residues predominate over residues 18-33 (APLPQPPPLPPPPPAG). Residues 101–134 (AELELEVDEEEGEEAELDGELLEEEELEEAEEED) show a composition bias toward acidic residues. 2 KH domains span residues 225 to 286 (TTEC…KREI) and 319 to 380 (QTTV…REEI). Disordered regions lie at residues 429–448 (ARMMSNYRNDSSSSLGSGST) and 506–566 (FEPV…HVGL). Over residues 430–448 (RMMSNYRNDSSSSLGSGST) the composition is skewed to low complexity. Residues 519–537 (PSGNMKTQRRGSQPSTPRL) show a composition bias toward polar residues. Phosphoserine occurs at positions 530 and 538. Residues 544-555 (SIEHPLARRVRS) show a composition bias toward basic and acidic residues. An RING-type zinc finger spans residues 601–641 (CVICFENEVIAALVPCGHNLFCMECANKICEKRTPSCPVCQ).

In terms of assembly, interacts with USP7, which antagonizes the ability to degrade mRNA. Phosphorylated.

It localises to the nucleus. The protein localises to the cytoplasm. It catalyses the reaction S-ubiquitinyl-[E2 ubiquitin-conjugating enzyme]-L-cysteine + [acceptor protein]-L-lysine = [E2 ubiquitin-conjugating enzyme]-L-cysteine + N(6)-ubiquitinyl-[acceptor protein]-L-lysine.. In terms of biological role, RNA-binding protein. May be involved in post-transcriptional regulatory mechanisms, modulating levels of some mRNAs by promoting their degradation in a way involving ubiquitin ligase activity. May act as suppressor of replication stress and chromosome missegregation. This is RNA-binding E3 ubiquitin-protein ligase MEX3C (Mex3c) from Mus musculus (Mouse).